The sequence spans 172 residues: Co-chaperone protein HscB (172 aa).

The J domain occupies 2–74; it reads DYFTLFGLPI…LKRAEYMLSL (73 aa).

This sequence belongs to the HscB family. Interacts with HscA and stimulates its ATPase activity. Interacts with IscU.

Its function is as follows. Co-chaperone involved in the maturation of iron-sulfur cluster-containing proteins. Seems to help targeting proteins to be folded toward HscA. The sequence is that of Co-chaperone protein HscB from Pectobacterium carotovorum subsp. carotovorum (strain PC1).